Here is a 101-residue protein sequence, read N- to C-terminus: UPF0235 protein Cpha266_2081 (101 aa).

Belongs to the UPF0235 family.

The protein is UPF0235 protein Cpha266_2081 of Chlorobium phaeobacteroides (strain DSM 266 / SMG 266 / 2430).